We begin with the raw amino-acid sequence, 840 residues long: Kinesin-like protein KIN-14J (840 aa).

A disordered region spans residues 1 to 74 (MEADPAPSST…KGEEPVVSAE (74 aa)). The 325-residue stretch at 177–501 (NIRVFCRCRP…LNFASRVRAI (325 aa)) folds into the Kinesin motor domain. Position 260–267 (260–267 (GQTGTGKT)) interacts with ATP. Positions 517–594 (KLKQMTEKIR…KKAARDTARS (78 aa)) form a coiled coil. A compositionally biased stretch (basic and acidic residues) spans 581–593 (LANEKKAARDTAR). Residues 581-617 (LANEKKAARDTARSTKPPLAPMRQRPPLGRIGNHIPP) are disordered.

The protein belongs to the TRAFAC class myosin-kinesin ATPase superfamily. Kinesin family. KIN-14 subfamily.

This Oryza sativa subsp. japonica (Rice) protein is Kinesin-like protein KIN-14J.